The chain runs to 100 residues: Urease subunit gamma (100 aa).

It belongs to the urease gamma subunit family. Heterotrimer of UreA (gamma), UreB (beta) and UreC (alpha) subunits. Three heterotrimers associate to form the active enzyme.

It localises to the cytoplasm. It carries out the reaction urea + 2 H2O + H(+) = hydrogencarbonate + 2 NH4(+). Its pathway is nitrogen metabolism; urea degradation; CO(2) and NH(3) from urea (urease route): step 1/1. The chain is Urease subunit gamma from Klebsiella pneumoniae.